The sequence spans 2053 residues: Cell adhesion molecule DSCAML1 (2053 aa).

The N-terminal stretch at 1–18 (MWLVTFLLLLDSLHKARP) is a signal peptide. Ig-like C2-type domains are found at residues 19–119 (EDVG…NIRV), 115–217 (PNIR…ARLS), 226–306 (PTIL…AEAT), 314–402 (PLHV…AIIA), 408–501 (PRIV…ARIN), 506–586 (PSIR…LSIS), 596–685 (PPLI…RQLI), 690–784 (PRFV…MFLT), and 788–885 (PAMI…LTVQ). At 19 to 1591 (EDVGTSLYFV…AQGEGDDVKK (1573 aa)) the chain is on the extracellular side. N-linked (GlcNAc...) asparagine glycosylation is found at Asn-29 and Asn-79. Intrachain disulfides connect Cys-47/Cys-103, Cys-146/Cys-198, Cys-247/Cys-294, Cys-336/Cys-386, and Cys-429/Cys-485. 9 N-linked (GlcNAc...) asparagine glycosylation sites follow: Asn-368, Asn-471, Asn-513, Asn-556, Asn-666, Asn-710, Asn-749, Asn-796, and Asn-809. Intrachain disulfides connect Cys-526-Cys-575 and Cys-617-Cys-669. A disulfide bridge connects residues Cys-711 and Cys-767. Cysteines 810 and 867 form a disulfide. 4 consecutive Fibronectin type-III domains span residues 887 to 984 (PPDP…TEEA), 989 to 1088 (PPMD…TLED), 1093 to 1189 (PPEN…TKED), and 1193 to 1288 (PPAG…AGKA). N-linked (GlcNAc...) asparagine glycans are attached at residues Asn-926, Asn-1082, Asn-1144, Asn-1162, Asn-1275, and Asn-1345. The Ig-like C2-type 10 domain maps to 1278-1377 (EKVTIEPAGK…TGGFDTIIVN (100 aa)). A disulfide bridge connects residues Cys-1311 and Cys-1363. Fibronectin type-III domains follow at residues 1383–1477 (PPDQ…THGR) and 1478–1578 (EPSF…TIPP). N-linked (GlcNAc...) asparagine glycans are attached at residues Asn-1492, Asn-1531, and Asn-1561. Residues 1592-1612 (LFTIGCPVILATLGVALLFIV) form a helical membrane-spanning segment. Topologically, residues 1613–2053 (RKKRKEKRLK…GAYSKSYTLV (441 aa)) are cytoplasmic. Disordered stretches follow at residues 1715–1741 (PLID…HSTR), 1773–1803 (HGVT…STES), 1840–1862 (SSDQ…STPS), and 1974–2053 (LAMP…YTLV). The segment covering 1732–1741 (KNVKSAHSTR) has biased composition (basic residues). A compositionally biased stretch (polar residues) spans 1773-1789 (HGVTVTESDSYSASLSQ). The segment covering 1977 to 2009 (PAPPAGTAPPAPGPTPAEPPTAPSAAPPAPSTE) has biased composition (pro residues). Residues 2029–2041 (EMSTSGVGRSQKQ) are compositionally biased toward polar residues.

As to quaternary structure, homodimer; mediates homophilic interactions to promote cell adhesion. As to expression, detected in heart, liver, pancreas, skeletal muscle, kidney and in brain, in particular in the amygdala, caudate nucleus, corpus callosum, hippocampus, substantia nigra, thalamus and subthalamus.

The protein resides in the cell membrane. The protein localises to the synapse. Its function is as follows. Cell adhesion molecule that plays a role in neuronal self-avoidance. Promotes repulsion between specific neuronal processes of either the same cell or the same subtype of cells. Promotes both isoneuronal self-avoidance for creating an orderly neurite arborization in retinal rod bipolar cells and heteroneuronal self-avoidance to maintain mosaic spacing between AII amacrine cells. Adhesion molecule that promotes lamina-specific synaptic connections in the retina: expressed in specific subsets of interneurons and retinal ganglion cells (RGCs) and promotes synaptic connectivity via homophilic interactions. This chain is Cell adhesion molecule DSCAML1 (DSCAML1), found in Homo sapiens (Human).